A 346-amino-acid polypeptide reads, in one-letter code: Biotin synthase (346 aa).

A Radical SAM core domain is found at 38 to 256 (RQVQVSTLLS…IAVARIMMPT (219 aa)). Residues cysteine 53, cysteine 57, and cysteine 60 each coordinate [4Fe-4S] cluster. 4 residues coordinate [2Fe-2S] cluster: cysteine 97, cysteine 128, cysteine 188, and arginine 260.

Belongs to the radical SAM superfamily. Biotin synthase family. Homodimer. Requires [4Fe-4S] cluster as cofactor. [2Fe-2S] cluster is required as a cofactor.

The enzyme catalyses (4R,5S)-dethiobiotin + (sulfur carrier)-SH + 2 reduced [2Fe-2S]-[ferredoxin] + 2 S-adenosyl-L-methionine = (sulfur carrier)-H + biotin + 2 5'-deoxyadenosine + 2 L-methionine + 2 oxidized [2Fe-2S]-[ferredoxin]. Its pathway is cofactor biosynthesis; biotin biosynthesis; biotin from 7,8-diaminononanoate: step 2/2. Catalyzes the conversion of dethiobiotin (DTB) to biotin by the insertion of a sulfur atom into dethiobiotin via a radical-based mechanism. This chain is Biotin synthase, found in Shigella boydii serotype 18 (strain CDC 3083-94 / BS512).